A 251-amino-acid polypeptide reads, in one-letter code: LexA repressor (251 aa).

Residues 26–46 (FDEMKDALGLKSKSGIHRLIK) constitute a DNA-binding region (H-T-H motif). Residues Ser-172 and Lys-210 each act as for autocatalytic cleavage activity in the active site.

This sequence belongs to the peptidase S24 family. Homodimer.

It catalyses the reaction Hydrolysis of Ala-|-Gly bond in repressor LexA.. Represses a number of genes involved in the response to DNA damage (SOS response), including recA and lexA. In the presence of single-stranded DNA, RecA interacts with LexA causing an autocatalytic cleavage which disrupts the DNA-binding part of LexA, leading to derepression of the SOS regulon and eventually DNA repair. In Rhodospirillum rubrum (strain ATCC 11170 / ATH 1.1.1 / DSM 467 / LMG 4362 / NCIMB 8255 / S1), this protein is LexA repressor.